We begin with the raw amino-acid sequence, 241 residues long: Gamma-interferon-inducible lysosomal thiol reductase-like protein (241 aa).

The N-terminal stretch at 1 to 18 (MLFKSLLLLSVYAVTCYG) is a signal peptide. N-linked (GlcNAc...) asparagine glycans are attached at residues N105 and N152. A helical membrane pass occupies residues 218–235 (STGSAISSLGMIVTVVAV).

The protein belongs to the GILT family. In terms of tissue distribution, salivary gland (at protein level). Low-level expression in midgut (at protein level). Expressed in head and leg tissues. Ovary. Fat body. (Microbial infection) Detected with Plasmodium berghei sporozoites isolated from the saliva of infected Anopheles gambiae mosquitoes (at protein level).

The protein localises to the membrane. Its function is as follows. Required for normal development of ovary and testis. (Microbial infection) Interacts with the surface of Plasmodium berghei sporozoites. Reduces P.berghei sporozoite cell traversal activity and transmission. Limits the motility of P.berghei sporozoites. Decreases the levels of host liver infection by P.berghei sporozoites. Does not affect P.berghei sporozoite viability. Indirectly promotes P.berghei survival in mosquitoes by influencing ovarian development and the subsequent production of 20-hydroxyecdysone and vitellogenin, which, in turn, modulates TEP1-dependent parasite killing. Promotes P.berghei infection in mosquitoes, most likely impacting the oocyst stage of parasite development. Functionally, (Microbial infection) Promotes Plasmodium falciparum survival in mosquitoes. In Anopheles gambiae (African malaria mosquito), this protein is Gamma-interferon-inducible lysosomal thiol reductase-like protein.